A 303-amino-acid polypeptide reads, in one-letter code: Enoyl-CoA hydratase domain-containing protein 3, mitochondrial (303 aa).

The transit peptide at 1-17 (MAAVAVLRAFGASGPMC) directs the protein to the mitochondrion. Residue Lys-110 is modified to N6-succinyllysine.

It belongs to the enoyl-CoA hydratase/isomerase family. As to expression, expressed in adipocytes. Expressed in blood cells, with higher expression in patients with low coronary lesions.

It is found in the mitochondrion. Its function is as follows. May play a role in fatty acid biosynthesis and insulin sensitivity. The polypeptide is Enoyl-CoA hydratase domain-containing protein 3, mitochondrial (Homo sapiens (Human)).